A 429-amino-acid polypeptide reads, in one-letter code: Gamma-glutamyl phosphate reductase (429 aa).

It belongs to the gamma-glutamyl phosphate reductase family.

The protein localises to the cytoplasm. The enzyme catalyses L-glutamate 5-semialdehyde + phosphate + NADP(+) = L-glutamyl 5-phosphate + NADPH + H(+). It functions in the pathway amino-acid biosynthesis; L-proline biosynthesis; L-glutamate 5-semialdehyde from L-glutamate: step 2/2. Its function is as follows. Catalyzes the NADPH-dependent reduction of L-glutamate 5-phosphate into L-glutamate 5-semialdehyde and phosphate. The product spontaneously undergoes cyclization to form 1-pyrroline-5-carboxylate. The polypeptide is Gamma-glutamyl phosphate reductase (Methylibium petroleiphilum (strain ATCC BAA-1232 / LMG 22953 / PM1)).